Here is a 215-residue protein sequence, read N- to C-terminus: FGFR1 oncogene partner 2 homolog (215 aa).

Residues 12 to 186 (AKELVERLRE…REILQITKIS (175 aa)) adopt a coiled-coil conformation. Residues 193 to 215 (EDASENSPHSAPVPNTDLILRKS) are disordered.

The protein belongs to the SIKE family.

The protein resides in the cytoplasm. The sequence is that of FGFR1 oncogene partner 2 homolog (fgfr1op2) from Xenopus laevis (African clawed frog).